A 385-amino-acid chain; its full sequence is Endoglucanase 1 (385 aa).

Residues 1–17 (MKLVFSALASLLSGASA) form the signal peptide. 2 N-linked (GlcNAc...) asparagine glycosylation sites follow: N93 and N140. E176 acts as the Proton donor in catalysis. 2 N-linked (GlcNAc...) asparagine glycosylation sites follow: N200 and N237. E284 serves as the catalytic Nucleophile. N289 and N331 each carry an N-linked (GlcNAc...) asparagine glycan.

It belongs to the glycosyl hydrolase 5 (cellulase A) family.

It catalyses the reaction Endohydrolysis of (1-&gt;4)-beta-D-glucosidic linkages in cellulose, lichenin and cereal beta-D-glucans.. Its pathway is glycan metabolism; cellulose degradation. Active towards carboxymethyl cellulose. The sequence is that of Endoglucanase 1 (eg 1) from Robillarda sp. (strain Y-20).